The sequence spans 413 residues: Divalent metal cation transporter MntH (413 aa).

The Cytoplasmic portion of the chain corresponds to 1 to 19; the sequence is MTDNRVENSSGRAARKLRL. The chain crosses the membrane as a helical span at residues 20–39; the sequence is ALMGPAFIAAIGYIDPGNFA. Over 40–51 the chain is Periplasmic; that stretch reads TNIQAGASFGYQ. The helical transmembrane segment at 52–71 threads the bilayer; sequence LLWVVVWANLMAMLIQILSA. At 72-95 the chain is on the cytoplasmic side; it reads KLGIATGKNLAEQIRDHYPRPVVW. The chain crosses the membrane as a helical span at residues 96–118; the sequence is FYWVQAEIIAMATDLAEFIGAAI. Topologically, residues 119–125 are periplasmic; that stretch reads GFKLILG. Residues 126–145 traverse the membrane as a helical segment; that stretch reads VSLLQGAVLTGIATFLILML. At 146-155 the chain is on the cytoplasmic side; sequence QRRGQKPLEK. The chain crosses the membrane as a helical span at residues 156–175; it reads VIGGLLLFVAAAYIVELFFS. At 176–196 the chain is on the periplasmic side; that stretch reads QPDMAQLGKGMVIPALPNPEA. The helical transmembrane segment at 197-220 threads the bilayer; sequence VFLAAGVLGATIMPHVIYLHSSLT. Residues 221-238 are Cytoplasmic-facing; sequence QHLHGGTRQQRYSATKWD. Residues 239-258 form a helical membrane-spanning segment; the sequence is VAIAMTIAGFVNLAMMATAA. Residues 259 to 276 lie on the Periplasmic side of the membrane; the sequence is AAFHFSGHTGIADLDQAY. Residues 277 to 297 form a helical membrane-spanning segment; it reads LTLEPLLSHAAATVFGLSLVA. At 298 to 327 the chain is on the cytoplasmic side; that stretch reads AGLSSTVVGTLAGQVVMQGFVRFHIPLWVR. A helical transmembrane segment spans residues 328 to 344; it reads RTITMLPSFIVILMGLD. At 345–350 the chain is on the periplasmic side; that stretch reads PTRILV. The helical transmembrane segment at 351–370 threads the bilayer; that stretch reads MSQVLLSFGIALALVPLLIF. Over 371–387 the chain is Cytoplasmic; the sequence is TSNATLMGELVNTRRVK. The chain crosses the membrane as a helical span at residues 388 to 406; it reads QVGWIIVVLVVALNIWLLV. The Periplasmic segment spans residues 407-413; the sequence is GTVMGLS.

The protein belongs to the NRAMP family.

Its subcellular location is the cell inner membrane. In terms of biological role, h(+)-stimulated, divalent metal cation uptake system. This chain is Divalent metal cation transporter MntH, found in Salmonella paratyphi C (strain RKS4594).